A 549-amino-acid chain; its full sequence is DNA mismatch repair protein MutL (549 aa).

It belongs to the DNA mismatch repair MutL/HexB family.

This protein is involved in the repair of mismatches in DNA. It is required for dam-dependent methyl-directed DNA mismatch repair. May act as a 'molecular matchmaker', a protein that promotes the formation of a stable complex between two or more DNA-binding proteins in an ATP-dependent manner without itself being part of a final effector complex. The chain is DNA mismatch repair protein MutL from Pseudothermotoga lettingae (strain ATCC BAA-301 / DSM 14385 / NBRC 107922 / TMO) (Thermotoga lettingae).